The primary structure comprises 434 residues: Enolase (434 aa).

Residue glutamine 165 coordinates (2R)-2-phosphoglycerate. Glutamate 207 functions as the Proton donor in the catalytic mechanism. The Mg(2+) site is built by aspartate 244, glutamate 291, and aspartate 318. 4 residues coordinate (2R)-2-phosphoglycerate: lysine 343, arginine 372, serine 373, and lysine 394. The active-site Proton acceptor is the lysine 343.

Belongs to the enolase family. Mg(2+) serves as cofactor.

Its subcellular location is the cytoplasm. It localises to the secreted. It is found in the cell surface. The catalysed reaction is (2R)-2-phosphoglycerate = phosphoenolpyruvate + H2O. It participates in carbohydrate degradation; glycolysis; pyruvate from D-glyceraldehyde 3-phosphate: step 4/5. Catalyzes the reversible conversion of 2-phosphoglycerate (2-PG) into phosphoenolpyruvate (PEP). It is essential for the degradation of carbohydrates via glycolysis. The polypeptide is Enolase (Staphylococcus haemolyticus (strain JCSC1435)).